Here is a 172-residue protein sequence, read N- to C-terminus: Transcription factor MafF (172 aa).

The tract at residues 51–76 is basic motif; the sequence is RLKQRRRTLKNRGYAASCRVKRVCQK. The bZIP domain maps to 51 to 114; sequence RLKQRRRTLK…DALRGKCEAL (64 aa). The segment at 79–93 is leucine-zipper; it reads LQKQKSELEREVDKL. Positions 140–172 are disordered; it reads VKSAPSPGPGPAPGPGPASGPGPAPGPAPAACS. Pro residues predominate over residues 145 to 172; sequence SPGPGPAPGPGPASGPGPAPGPAPAACS.

Belongs to the bZIP family. Maf subfamily. As to quaternary structure, monomer and homo- or heterodimer. Interacts with MIP. Forms high affinity heterodimers with members of the CNC-bZIP family such as NFE2L1/NRF1.

It is found in the nucleus. In terms of biological role, since they lack a putative transactivation domain, the small Mafs behave as transcriptional repressors when they dimerize among themselves. However, they seem to serve as transcriptional activators by dimerizing with other (usually larger) basic-zipper proteins, such as NFE2L1/NRF1, and recruiting them to specific DNA-binding sites. Interacts with the upstream promoter region of the oxytocin receptor gene. May be a transcriptional enhancer in the up-regulation of the oxytocin receptor gene at parturition. This is Transcription factor MafF (MAFF) from Bos taurus (Bovine).